The following is a 149-amino-acid chain: L-alanine exporter AlaE (149 aa).

4 consecutive transmembrane segments (helical) span residues 16-36, 46-66, 83-105, and 115-135; these read FAMV…LSGM, LVAI…RDLI, ADVL…TVGA, and SSNI…LDYC.

The protein belongs to the AlaE exporter family.

The protein localises to the cell inner membrane. Functionally, exports L-alanine. The sequence is that of L-alanine exporter AlaE from Salmonella typhimurium (strain LT2 / SGSC1412 / ATCC 700720).